Here is a 167-residue protein sequence, read N- to C-terminus: Leptin (167 aa).

The N-terminal stretch at 1–21 (MRCGPLYQFLWLWPYLSYVEA) is a signal peptide. Cysteine 117 and cysteine 167 form a disulfide bridge.

This sequence belongs to the leptin family.

The protein localises to the secreted. Functionally, key player in the regulation of energy balance and body weight control. Once released into the circulation, has central and peripheral effects by binding LEPR, found in many tissues, which results in the activation of several major signaling pathways. In the hypothalamus, acts as an appetite-regulating factor that induces a decrease in food intake and an increase in energy consumption by inducing anorexinogenic factors and suppressing orexigenic neuropeptides, also regulates bone mass and secretion of hypothalamo-pituitary-adrenal hormones. In the periphery, increases basal metabolism, influences reproductive function, regulates pancreatic beta-cell function and insulin secretion, is pro-angiogenic for endothelial cell and affects innate and adaptive immunity. In the arcuate nucleus of the hypothalamus, activates by depolarization POMC neurons inducing FOS and SOCS3 expression to release anorexigenic peptides and inhibits by hyperpolarization NPY neurons inducing SOCS3 with a consequent reduction on release of orexigenic peptides. In addition to its known satiety inducing effect, has a modulatory role in nutrient absorption. In the intestine, reduces glucose absorption by enterocytes by activating PKC and leading to a sequential activation of p38, PI3K and ERK signaling pathways which exerts an inhibitory effect on glucose absorption. Acts as a growth factor on certain tissues, through the activation of different signaling pathways increases expression of genes involved in cell cycle regulation such as CCND1, via JAK2-STAT3 pathway, or VEGFA, via MAPK1/3 and PI3K-AKT1 pathways. May also play an apoptotic role via JAK2-STAT3 pathway and up-regulation of BIRC5 expression. Pro-angiogenic, has mitogenic activity on vascular endothelial cells and plays a role in matrix remodeling by regulating the expression of matrix metalloproteinases (MMPs) and tissue inhibitors of metalloproteinases (TIMPs). In innate immunity, modulates the activity and function of neutrophils by increasing chemotaxis and the secretion of oxygen radicals. Increases phagocytosis by macrophages and enhances secretion of pro-inflammatory mediators. Increases cytotoxic ability of NK cells. Plays a pro-inflammatory role, in synergy with IL1B, by inducing NOS2 which promotes the production of IL6, IL8 and Prostaglandin E2, through a signaling pathway that involves JAK2, PI3K, MAP2K1/MEK1 and MAPK14/p38. In adaptive immunity, promotes the switch of memory T-cells towards T helper-1 cell immune responses. Increases CD4(+)CD25(-) T-cell proliferation and reduces autophagy during TCR (T-cell receptor) stimulation, through MTOR signaling pathway activation and BCL2 up-regulation. The sequence is that of Leptin (LEP) from Bubalus bubalis (Domestic water buffalo).